We begin with the raw amino-acid sequence, 68 residues long: Small ribosomal subunit protein bS21 (68 aa).

Belongs to the bacterial ribosomal protein bS21 family.

The chain is Small ribosomal subunit protein bS21 from Ruegeria pomeroyi (strain ATCC 700808 / DSM 15171 / DSS-3) (Silicibacter pomeroyi).